Here is a 351-residue protein sequence, read N- to C-terminus: D-threonate 4-phosphate dehydrogenase (351 aa).

Substrate is bound by residues His147 and Thr148. A divalent metal cation contacts are provided by His177, His221, and His276. Positions 284, 293, and 302 each coordinate substrate.

Belongs to the PdxA family. PdxA2 subfamily. Homodimer. The cofactor is a divalent metal cation.

It catalyses the reaction 4-O-phospho-D-threonate + NAD(+) = dihydroxyacetone phosphate + CO2 + NADH. Functionally, catalyzes the NAD-dependent oxidation and subsequent decarboxylation of D-threonate 4-phosphate to produce dihydroxyacetone phosphate (DHAP). Can also use 4-hydroxy-L-threonine 4-phosphate as substrate. The protein is D-threonate 4-phosphate dehydrogenase of Bordetella bronchiseptica (strain ATCC BAA-588 / NCTC 13252 / RB50) (Alcaligenes bronchisepticus).